Here is a 379-residue protein sequence, read N- to C-terminus: Protein RecA (379 aa).

Residues 1 to 24 are disordered; it reads MSVDVKSAQSSKSDSLQAEPRPGE. Positions 7–16 are enriched in polar residues; sequence SAQSSKSDSL. 84–91 contacts ATP; sequence GPESSGKT.

It belongs to the RecA family.

The protein resides in the cytoplasm. Functionally, can catalyze the hydrolysis of ATP in the presence of single-stranded DNA, the ATP-dependent uptake of single-stranded DNA by duplex DNA, and the ATP-dependent hybridization of homologous single-stranded DNAs. It interacts with LexA causing its activation and leading to its autocatalytic cleavage. In Prochlorococcus marinus (strain MIT 9303), this protein is Protein RecA.